The following is a 201-amino-acid chain: 3-isopropylmalate dehydratase small subunit (201 aa).

Belongs to the LeuD family. LeuD type 1 subfamily. In terms of assembly, heterodimer of LeuC and LeuD.

It carries out the reaction (2R,3S)-3-isopropylmalate = (2S)-2-isopropylmalate. Its pathway is amino-acid biosynthesis; L-leucine biosynthesis; L-leucine from 3-methyl-2-oxobutanoate: step 2/4. Functionally, catalyzes the isomerization between 2-isopropylmalate and 3-isopropylmalate, via the formation of 2-isopropylmaleate. The protein is 3-isopropylmalate dehydratase small subunit of Cereibacter sphaeroides (strain ATCC 17029 / ATH 2.4.9) (Rhodobacter sphaeroides).